Reading from the N-terminus, the 364-residue chain is MKKNNRVVVGMSGGVDSSVSAYLLKEQGFDVIGVTMQIWQDKDEEAVRVEGGCCSLSAVNDARRVANKIGIKYYVMNFKDVFKEKVIDYFVDEYLKGRTPNPCIACNKYIKFEELLKRAWMIDAYYVATGHYAIKEYDEERGRYLLKKSVDTSKDQTYVLYNLTQTQLEHILFPLGKYKKDEVRELAKNLGLPVASKPDSQEICFVTDNDYGKFIRENAKEEIKPGEFRDTRGRFLGYHKGIIHYTIGQRKGLGISVGKPLYVVDIDAENNVVVLGYGDEVFGDELISYNNNFISIDKLEREMRVKAKIRYNAKEQDAVIRPLEDGKVFVKFDNPQRAITPGQSVVFYEGDIVVGGGTIERKVR.

Residues G10 to S17 and M36 each bind ATP. Catalysis depends on C106, which acts as the Nucleophile. A disulfide bridge connects residues C106 and C204. G130 serves as a coordination point for ATP. The interaction with tRNA stretch occupies residues K154–Q156. The active-site Cysteine persulfide intermediate is C204. Residues R310 to Y311 form an interaction with tRNA region.

Belongs to the MnmA/TRMU family.

The protein resides in the cytoplasm. It carries out the reaction S-sulfanyl-L-cysteinyl-[protein] + uridine(34) in tRNA + AH2 + ATP = 2-thiouridine(34) in tRNA + L-cysteinyl-[protein] + A + AMP + diphosphate + H(+). Functionally, catalyzes the 2-thiolation of uridine at the wobble position (U34) of tRNA, leading to the formation of s(2)U34. In Thermoanaerobacter pseudethanolicus (strain ATCC 33223 / 39E) (Clostridium thermohydrosulfuricum), this protein is tRNA-specific 2-thiouridylase MnmA 1.